The sequence spans 561 residues: DNA ligase B (561 aa).

The N6-AMP-lysine intermediate role is filled by Lys125.

The protein belongs to the NAD-dependent DNA ligase family. LigB subfamily.

It catalyses the reaction NAD(+) + (deoxyribonucleotide)n-3'-hydroxyl + 5'-phospho-(deoxyribonucleotide)m = (deoxyribonucleotide)n+m + AMP + beta-nicotinamide D-nucleotide.. Its function is as follows. Catalyzes the formation of phosphodiester linkages between 5'-phosphoryl and 3'-hydroxyl groups in double-stranded DNA using NAD as a coenzyme and as the energy source for the reaction. The chain is DNA ligase B from Salmonella schwarzengrund (strain CVM19633).